A 340-amino-acid chain; its full sequence is Adenine deaminase (340 aa).

The Zn(2+) site is built by histidine 17, histidine 19, and histidine 197. Glutamate 200 serves as the catalytic Proton donor. Aspartate 278 contributes to the Zn(2+) binding site. Aspartate 279 lines the substrate pocket.

The protein belongs to the metallo-dependent hydrolases superfamily. Adenosine and AMP deaminases family. Adenine deaminase type 2 subfamily. It depends on Zn(2+) as a cofactor.

It carries out the reaction adenine + H2O + H(+) = hypoxanthine + NH4(+). In terms of biological role, catalyzes the hydrolytic deamination of adenine to hypoxanthine. Plays an important role in the purine salvage pathway and in nitrogen catabolism. The polypeptide is Adenine deaminase (Streptomyces coelicolor (strain ATCC BAA-471 / A3(2) / M145)).